We begin with the raw amino-acid sequence, 240 residues long: Competence protein ComFC (240 aa).

Belongs to the ComF/GntX family. As to quaternary structure, monomer and dimer in solution. Interacts with ComFA and DprA; ComFA-ComFC form rings about 150 Angstroms in diameter with apparent 6-fold symmetry.

Its function is as follows. Involved in transformation (genetic competence for DNA uptake). This is Competence protein ComFC (comFC) from Bacillus subtilis (strain 168).